The following is a 150-amino-acid chain: Small heat shock protein HspE (150 aa).

A sHSP domain is found at 27-137 (VDNGDTYPPY…KPRQIAIDVA (111 aa)).

This sequence belongs to the small heat shock protein (HSP20) family.

This chain is Small heat shock protein HspE (hspE), found in Bradyrhizobium diazoefficiens (strain JCM 10833 / BCRC 13528 / IAM 13628 / NBRC 14792 / USDA 110).